A 1070-amino-acid polypeptide reads, in one-letter code: DNA-directed RNA polymerase subunit beta (1070 aa).

It belongs to the RNA polymerase beta chain family. In plastids the minimal PEP RNA polymerase catalytic core is composed of four subunits: alpha, beta, beta', and beta''. When a (nuclear-encoded) sigma factor is associated with the core the holoenzyme is formed, which can initiate transcription.

The protein resides in the plastid. It is found in the chloroplast. It carries out the reaction RNA(n) + a ribonucleoside 5'-triphosphate = RNA(n+1) + diphosphate. Its function is as follows. DNA-dependent RNA polymerase catalyzes the transcription of DNA into RNA using the four ribonucleoside triphosphates as substrates. This chain is DNA-directed RNA polymerase subunit beta, found in Nicotiana tomentosiformis (Tobacco).